Consider the following 264-residue polypeptide: MKKITINDLMTWKHEGRKFASITAYDASFAQLFEQQEVPVLLVGDSLGMVLQGKPDTLPVSVSDIAYHTRCVRAGSPNTLLMADMPFMSYSTPEQACESAAELMRAGANMVKLEGGAWLAETITKLTERAVPVCAHLGLTPQSVNIFGGYKVQGRDSDHAAQMVKDAILLKNAGAQIILLECVPASLAERITKAVEVPVIGIGAGNVTDGQILVMHDMFGISANYMPRFSKNYLAETGDMRTAVSKYLEEVEAGTFPGPQHTFE.

Mg(2+) is bound by residues D45 and D84. Residues 45–46 (DS), D84, and K112 contribute to the 3-methyl-2-oxobutanoate site. E114 is a Mg(2+) binding site. Catalysis depends on E181, which acts as the Proton acceptor.

It belongs to the PanB family. In terms of assembly, homodecamer; pentamer of dimers. The cofactor is Mg(2+).

It localises to the cytoplasm. It catalyses the reaction 3-methyl-2-oxobutanoate + (6R)-5,10-methylene-5,6,7,8-tetrahydrofolate + H2O = 2-dehydropantoate + (6S)-5,6,7,8-tetrahydrofolate. The protein operates within cofactor biosynthesis; (R)-pantothenate biosynthesis; (R)-pantoate from 3-methyl-2-oxobutanoate: step 1/2. Its function is as follows. Catalyzes the reversible reaction in which hydroxymethyl group from 5,10-methylenetetrahydrofolate is transferred onto alpha-ketoisovalerate to form ketopantoate. This chain is 3-methyl-2-oxobutanoate hydroxymethyltransferase, found in Photobacterium profundum (strain SS9).